Here is a 198-residue protein sequence, read N- to C-terminus: MDYYSTQISKLIEELGRLPGIGAKSAQRLAFHIINMPKEQVEHLAKTMLDARSNVKYCKVCQTLTDKEICPICSSEKRDQKVIMVVENTRDLAAYEKTGKFDGVYHVLHGAISPMLGIGPQDIKLKELMLRLQGDVDEVIIATNSSLEGEATAMYISKLIKPAGIKVSRIASGVPVGGDLEYIDEVTLLRALDGRIQL.

The segment at 58–73 (CKVCQTLTDKEICPIC) adopts a C4-type zinc-finger fold. The 95-residue stretch at 81 to 175 (KVIMVVENTR…KVSRIASGVP (95 aa)) folds into the Toprim domain.

The protein belongs to the RecR family.

Its function is as follows. May play a role in DNA repair. It seems to be involved in an RecBC-independent recombinational process of DNA repair. It may act with RecF and RecO. The chain is Recombination protein RecR from Lachnoclostridium phytofermentans (strain ATCC 700394 / DSM 18823 / ISDg) (Clostridium phytofermentans).